Here is a 273-residue protein sequence, read N- to C-terminus: Formamidopyrimidine-DNA glycosylase (273 aa).

Residue P2 is the Schiff-base intermediate with DNA of the active site. The active-site Proton donor is E3. Catalysis depends on K58, which acts as the Proton donor; for beta-elimination activity. Positions 92, 111, and 153 each coordinate DNA. An FPG-type zinc finger spans residues M238–K272. R262 serves as the catalytic Proton donor; for delta-elimination activity.

The protein belongs to the FPG family. As to quaternary structure, monomer. Requires Zn(2+) as cofactor.

The catalysed reaction is Hydrolysis of DNA containing ring-opened 7-methylguanine residues, releasing 2,6-diamino-4-hydroxy-5-(N-methyl)formamidopyrimidine.. The enzyme catalyses 2'-deoxyribonucleotide-(2'-deoxyribose 5'-phosphate)-2'-deoxyribonucleotide-DNA = a 3'-end 2'-deoxyribonucleotide-(2,3-dehydro-2,3-deoxyribose 5'-phosphate)-DNA + a 5'-end 5'-phospho-2'-deoxyribonucleoside-DNA + H(+). In terms of biological role, involved in base excision repair of DNA damaged by oxidation or by mutagenic agents. Acts as a DNA glycosylase that recognizes and removes damaged bases. Has a preference for oxidized purines, such as 7,8-dihydro-8-oxoguanine (8-oxoG). Has AP (apurinic/apyrimidinic) lyase activity and introduces nicks in the DNA strand. Cleaves the DNA backbone by beta-delta elimination to generate a single-strand break at the site of the removed base with both 3'- and 5'-phosphates. This is Formamidopyrimidine-DNA glycosylase from Rickettsia bellii (strain OSU 85-389).